We begin with the raw amino-acid sequence, 207 residues long: MLVFKGKLKEHPRWEVENELYRFRNRVFSDRLGWDVESHRGLEQDSFDTPDTHWVLIEDEEGLCGCIRLLSCAQDYMLPSIFPTALAGEAPPRSSDVWELTRLAIDANRAPRMGNGVSELTCVIFREVYAFARAKGIRELVAVVSLPVERIFRRLGLPIERLGHRQAVDLGAVRGVGIRFHLDERFARAVGHPMQGEYADARELVTE.

Belongs to the autoinducer synthase family.

It catalyses the reaction a fatty acyl-[ACP] + S-adenosyl-L-methionine = an N-acyl-L-homoserine lactone + S-methyl-5'-thioadenosine + holo-[ACP] + H(+). Functionally, required for the synthesis of N-butanoyl-L-homoserine lactone (BHL), an autoinducer molecule which binds to AsaR. This chain is Acyl-homoserine-lactone synthase (asaI), found in Aeromonas salmonicida.